The sequence spans 216 residues: GTP cyclohydrolase-2 (216 aa).

Residue 51–55 participates in GTP binding; the sequence is RIHSE. Zn(2+) is bound by residues Cys-56, Cys-67, and Cys-69. GTP contacts are provided by residues Gln-72, 94–96, and Thr-116; that span reads EGR. The Proton acceptor role is filled by Asp-128. Catalysis depends on Arg-130, which acts as the Nucleophile. 2 residues coordinate GTP: Thr-151 and Lys-156.

This sequence belongs to the GTP cyclohydrolase II family. Zn(2+) is required as a cofactor.

The enzyme catalyses GTP + 4 H2O = 2,5-diamino-6-hydroxy-4-(5-phosphoribosylamino)-pyrimidine + formate + 2 phosphate + 3 H(+). It participates in cofactor biosynthesis; riboflavin biosynthesis; 5-amino-6-(D-ribitylamino)uracil from GTP: step 1/4. In terms of biological role, catalyzes the conversion of GTP to 2,5-diamino-6-ribosylamino-4(3H)-pyrimidinone 5'-phosphate (DARP), formate and pyrophosphate. The polypeptide is GTP cyclohydrolase-2 (Haemophilus influenzae (strain PittEE)).